We begin with the raw amino-acid sequence, 86 residues long: Small ribosomal subunit protein eS27y (86 aa).

The segment at 39 to 61 (CQGCFNITTVFSHSQTVVVCGNC) adopts a C4-type zinc-finger fold.

This sequence belongs to the eukaryotic ribosomal protein eS27 family. The cofactor is Zn(2+).

In terms of biological role, may be involved in the elimination of damaged mRNA after UV irradiation. The polypeptide is Small ribosomal subunit protein eS27y (RPS27B) (Arabidopsis thaliana (Mouse-ear cress)).